The sequence spans 197 residues: Ycf20-like protein (197 aa).

Transmembrane regions (helical) follow at residues 113–133, 138–158, and 173–193; these read MKIF…TILG, WDVL…MLMY, and FVVF…VDAF.

The protein belongs to the ycf20 family.

The protein resides in the membrane. The polypeptide is Ycf20-like protein (Arabidopsis thaliana (Mouse-ear cress)).